Reading from the N-terminus, the 121-residue chain is MNIKRVRRISSEIKKVISSSIINSLKDPRIDKLNVSVTEVKVTNDLSFATVYIAVIGDDEKKKQTLEGLNKAKGFLKKQIGENVDLRHVPQLIFKIDETSEQSMHIENLIKSIHEENHNEN.

Belongs to the RbfA family. As to quaternary structure, monomer. Binds 30S ribosomal subunits, but not 50S ribosomal subunits or 70S ribosomes.

It is found in the cytoplasm. One of several proteins that assist in the late maturation steps of the functional core of the 30S ribosomal subunit. Associates with free 30S ribosomal subunits (but not with 30S subunits that are part of 70S ribosomes or polysomes). Required for efficient processing of 16S rRNA. May interact with the 5'-terminal helix region of 16S rRNA. The polypeptide is Ribosome-binding factor A (Finegoldia magna (strain ATCC 29328 / DSM 20472 / WAL 2508) (Peptostreptococcus magnus)).